Consider the following 388-residue polypeptide: MKHLHRFFSSDASGGIILIIAAALAMLMANMGATSGWYHDFLETPVQLRVGALEINKNMLLWINDALMAVFFLLIGLEVKRELMQGSLASLRQAAFPVIAAIGGMIVPALLYLAFNYSDPVTREGWAIPAATDIAFALGVLALLGSRVPLALKIFLMALAIIDDLGAIVIIALFYTSDLSIVSLGVAAFAIAVLALLNLCGVRRTGVYILVGAVLWTAVLKSGVHATLAGVIVGFFIPLKEKHGRSPAKRLEHVLHPWVAYLILPLFAFANAGVSLQGVTIDGLTSMLPLGIIAGLLIGKPLGISLFCWLALRFKLAHLPQGTTYQQIMAVGILCGIGFTMSIFIASLAFGNVDPELINWAKLGILIGSLLSAVVGYSWLRARLNAPA.

11 consecutive transmembrane segments (helical) span residues 14-34, 59-79, 95-115, 125-145, 154-174, 179-199, 219-239, 254-274, 292-312, 328-348, and 360-380; these read GGII…MGAT, MLLW…GLEV, AFPV…YLAF, GWAI…ALLG, IFLM…IALF, LSIV…LLNL, VLKS…FIPL, VLHP…NAGV, IIAG…WLAL, IMAV…IASL, and WAKL…YSWL.

The protein belongs to the NhaA Na(+)/H(+) (TC 2.A.33) antiporter family.

The protein localises to the cell inner membrane. It catalyses the reaction Na(+)(in) + 2 H(+)(out) = Na(+)(out) + 2 H(+)(in). Na(+)/H(+) antiporter that extrudes sodium in exchange for external protons. The sequence is that of Na(+)/H(+) antiporter NhaA from Salmonella choleraesuis (strain SC-B67).